Consider the following 153-residue polypeptide: Arginine repressor (153 aa).

It belongs to the ArgR family.

Its subcellular location is the cytoplasm. The protein operates within amino-acid biosynthesis; L-arginine biosynthesis [regulation]. Its function is as follows. Regulates arginine biosynthesis genes. The chain is Arginine repressor from Actinobacillus pleuropneumoniae serotype 7 (strain AP76).